The primary structure comprises 485 residues: Retron Mx162 reverse transcriptase (485 aa).

Residues 1–33 (MTARLDPFVPAASPQAVPTPELTAPSSDAAAKR) form a disordered region. The region spanning 167–407 (RWFAFHREVD…TRQRVTGLVV (241 aa)) is the Reverse transcriptase domain. Asp250, Asp346, and Asp347 together coordinate Mg(2+).

It belongs to the bacterial reverse transcriptase family.

The enzyme catalyses DNA(n) + a 2'-deoxyribonucleoside 5'-triphosphate = DNA(n+1) + diphosphate. MsDNA synthesis is inhibited by rifampicin and chloramphenicol. Reverse transcriptase (RT) responsible for synthesis of msDNA-Mx162 (a branched molecule with RNA linked by a 2',5'-phosphodiester bond to ssDNA). The retron transcript serves as primer (from a conserved internal G residue) and template for the reaction, and codes for the RT. The retron is involved in antiviral defense. In Myxococcus xanthus, this protein is Retron Mx162 reverse transcriptase.